Reading from the N-terminus, the 337-residue chain is Zinc finger protein Gfi-1b (337 aa).

The segment at 1-20 is mediates repression of transcription; that stretch reads MPRSFLVKSKKAHTYHQHRF. Positions 1-20 are SNAG domain; it reads MPRSFLVKSKKAHTYHQHRF. 6 C2H2-type zinc fingers span residues 170–193, 199–221, 227–249, 255–277, 283–305, and 311–334; these read YHCV…RRSH, FACE…TNIH, FECK…LLIH, YPCQ…TYIH, HKCQ…SRKH, and FSCE…ETQH.

In terms of tissue distribution, expressed in erythroid cells of primitive and definitive lineage and bone marrow cells.

The protein localises to the nucleus. Functionally, essential transcriptional regulator necessary for development and differentiation of erythroid and megakaryocytic lineages. Alters histone methylation by recruiting histone methyltransferase to target genes promoters. Plays a role in heterochromatin formation. This is Zinc finger protein Gfi-1b (GFI1B) from Gallus gallus (Chicken).